The chain runs to 108 residues: Large ribosomal subunit protein uL24 (108 aa).

Belongs to the universal ribosomal protein uL24 family. Part of the 50S ribosomal subunit.

Functionally, one of two assembly initiator proteins, it binds directly to the 5'-end of the 23S rRNA, where it nucleates assembly of the 50S subunit. In terms of biological role, one of the proteins that surrounds the polypeptide exit tunnel on the outside of the subunit. This is Large ribosomal subunit protein uL24 from Pelobacter propionicus (strain DSM 2379 / NBRC 103807 / OttBd1).